The chain runs to 417 residues: Phosphoglycerate kinase (417 aa).

Residues Val-23, Asp-24, Phe-25, Asn-26, Gln-39, Arg-40, Ser-63, His-64, Gly-66, Arg-67, Leu-122, Arg-123, His-170, and Arg-171 each contribute to the (2R)-3-phosphoglycerate site. Position 203 is a phosphoserine (Ser-203). Gly-214 is an ADP binding site. A CDP-binding site is contributed by Gly-214. AMP-binding residues include Ala-215 and Lys-216. Ala-215 provides a ligand contact to ATP. Ala-215 contacts Mg(2+). Residue Asp-219 participates in CDP binding. Asp-219 lines the Mg(2+) pocket. Lys-220 contributes to the AMP binding site. Lys-220 is an ATP binding site. Gly-238 contributes to the ADP binding site. A CDP-binding site is contributed by Gly-238. Ala-239 and Gly-313 together coordinate AMP. ATP contacts are provided by Ala-239 and Gly-313. Positions 338 and 343 each coordinate CDP. Residue Phe-343 participates in ADP binding. Glu-344 is an AMP binding site. Glu-344, Asp-375, and Thr-376 together coordinate ATP. Position 375 (Asp-375) interacts with Mg(2+).

Belongs to the phosphoglycerate kinase family. Monomer. Mg(2+) serves as cofactor. In terms of processing, dephosphorylated by PTC1 and PTC2 at Ser-203; the protein is cytosolic when dephosphorylated.

The protein localises to the cytoplasm. It localises to the cytosol. The protein resides in the mitochondrion. The enzyme catalyses (2R)-3-phosphoglycerate + ATP = (2R)-3-phospho-glyceroyl phosphate + ADP. It participates in carbohydrate degradation; glycolysis; pyruvate from D-glyceraldehyde 3-phosphate: step 2/5. In terms of biological role, catalyzes one of the two ATP producing reactions in the glycolytic pathway via the reversible conversion of 1,3-diphosphoglycerate to 3-phosphoglycerate. Both L- and D- forms of purine and pyrimidine nucleotides can be used as substrates, but the activity is much lower on pyrimidines. Negatively regulates the biosynthesis of acetyl-CoA from pyruvate in the mitochondrion and consequently also attenuates aflatoxin production. This chain is Phosphoglycerate kinase, found in Aspergillus flavus (strain ATCC 200026 / FGSC A1120 / IAM 13836 / NRRL 3357 / JCM 12722 / SRRC 167).